A 334-amino-acid chain; its full sequence is Retinol dehydrogenase 14 (334 aa).

An NADP(+)-binding site is contributed by 51 to 57; it reads GANSGLG. S190 is a substrate binding site. Y215 functions as the Proton acceptor in the catalytic mechanism.

The protein belongs to the short-chain dehydrogenases/reductases (SDR) family.

The catalysed reaction is all-trans-retinol + NADP(+) = all-trans-retinal + NADPH + H(+). It carries out the reaction 11-cis-retinol + NADP(+) = 11-cis-retinal + NADPH + H(+). The enzyme catalyses 9-cis-retinol + NADP(+) = 9-cis-retinal + NADPH + H(+). Retinol dehydrogenase with a clear preference for NADP. Displays high activity towards 9-cis, 11-cis and all-trans-retinol. Shows a very weak activity towards 13-cis-retinol. Has no activity towards steroids. The sequence is that of Retinol dehydrogenase 14 (Rdh14) from Mus musculus (Mouse).